Consider the following 309-residue polypeptide: Glutaminase (309 aa).

The substrate site is built by serine 64, asparagine 114, glutamate 160, asparagine 167, tyrosine 191, tyrosine 243, and valine 261.

This sequence belongs to the glutaminase family. As to quaternary structure, homotetramer.

The enzyme catalyses L-glutamine + H2O = L-glutamate + NH4(+). The polypeptide is Glutaminase (Rhizobium rhizogenes (strain K84 / ATCC BAA-868) (Agrobacterium radiobacter)).